Here is a 224-residue protein sequence, read N- to C-terminus: Imidazole glycerol phosphate synthase subunit HisH (224 aa).

Residues Asp-5–Gly-214 enclose the Glutamine amidotransferase type-1 domain. Cys-80 serves as the catalytic Nucleophile. Active-site residues include His-189 and Glu-191.

As to quaternary structure, heterodimer of HisH and HisF.

It is found in the cytoplasm. It catalyses the reaction 5-[(5-phospho-1-deoxy-D-ribulos-1-ylimino)methylamino]-1-(5-phospho-beta-D-ribosyl)imidazole-4-carboxamide + L-glutamine = D-erythro-1-(imidazol-4-yl)glycerol 3-phosphate + 5-amino-1-(5-phospho-beta-D-ribosyl)imidazole-4-carboxamide + L-glutamate + H(+). It carries out the reaction L-glutamine + H2O = L-glutamate + NH4(+). It participates in amino-acid biosynthesis; L-histidine biosynthesis; L-histidine from 5-phospho-alpha-D-ribose 1-diphosphate: step 5/9. Its function is as follows. IGPS catalyzes the conversion of PRFAR and glutamine to IGP, AICAR and glutamate. The HisH subunit catalyzes the hydrolysis of glutamine to glutamate and ammonia as part of the synthesis of IGP and AICAR. The resulting ammonia molecule is channeled to the active site of HisF. This chain is Imidazole glycerol phosphate synthase subunit HisH, found in Shewanella loihica (strain ATCC BAA-1088 / PV-4).